The sequence spans 244 residues: Ras-related protein Rab-12 (244 aa).

Met1 carries the post-translational modification N-acetylmethionine. Residues 1–10 are compositionally biased toward low complexity; the sequence is MDPGAALQRR. The segment at 1–37 is disordered; it reads MDPGAALQRRAGGGGGLGAGSPALSGGQGRRRKQPPR. Residues Ser21 and Ser25 each carry the phosphoserine modification. Gly52 lines the GDP pocket. Positions 52, 53, 54, 55, and 56 each coordinate GTP. The GDP site is built by Gly54, Lys55, Thr56, and Ser57. Residue Thr56 coordinates Mg(2+). Short sequence motifs (switch) lie at residues 65 to 79 and 97 to 114; these read DTFC…GVDF and DTAG…YYRS. 2 residues coordinate GTP: Ser73 and Thr74. Mg(2+)-binding residues include Thr74 and Asp97. A GTP-binding site is contributed by Gly100. Ser106 carries the post-translational modification Phosphoserine; by LRRK2. GDP-binding residues include Asn155, Lys156, Asp158, and Cys159. GTP contacts are provided by Asn155, Lys156, and Asp158. Residues Ser186, Ala187, and Lys188 each coordinate GTP. Residues Ala187 and Lys188 each contribute to the GDP site. Residues 225 to 244 form a disordered region; that stretch reads QPEPEIPPELPPPRPHVRCC. The segment covering 228-238 has biased composition (pro residues); the sequence is PEIPPELPPPR. Residues Cys243 and Cys244 are each lipidated (S-geranylgeranyl cysteine).

The protein belongs to the small GTPase superfamily. Rab family. In terms of assembly, interacts with RABIF. Interacts with OPTN. Interacts with LRRK2; interaction facilitates phosphorylation of Ser-106. Interacts with GDI1, GDI2, CHM and CHML; these interactions are disrupted by phosphorylation on Ser-106. Interacts with RILPL1 and RILPL2; these interactions are dependent on phosphorylation of Ser-106. Mg(2+) is required as a cofactor. In terms of processing, phosphorylation of Ser-106 in the switch II region by LRRK2 prevents the association of RAB regulatory proteins, including CHM, CHML and RAB GDP dissociation inhibitors GDI1 and GDI2.

The protein localises to the recycling endosome membrane. It is found in the lysosome membrane. The protein resides in the golgi apparatus membrane. Its subcellular location is the cytoplasmic vesicle. It localises to the autophagosome. It carries out the reaction GTP + H2O = GDP + phosphate + H(+). With respect to regulation, regulated by guanine nucleotide exchange factors (GEFs) including DENND3 which promote the exchange of bound GDP for free GTP. Regulated by GTPase activating proteins (GAPs) which increase the GTP hydrolysis activity. Inhibited by GDP dissociation inhibitors (GDIs). The small GTPases Rab are key regulators of intracellular membrane trafficking, from the formation of transport vesicles to their fusion with membranes. Rabs cycle between an inactive GDP-bound form and an active GTP-bound form that is able to recruit to membranes different sets of downstream effectors directly responsible for vesicle formation, movement, tethering and fusion. RAB12 may play a role in protein transport from recycling endosomes to lysosomes regulating, for instance, the degradation of the transferrin receptor. Involved in autophagy. This chain is Ras-related protein Rab-12, found in Homo sapiens (Human).